An 89-amino-acid chain; its full sequence is Large ribosomal subunit protein bL27 (89 aa).

The segment at 1–24 (MAHKKAGGSSRNGRDSDGRRLGVK) is disordered.

This sequence belongs to the bacterial ribosomal protein bL27 family.

The protein is Large ribosomal subunit protein bL27 of Azorhizobium caulinodans (strain ATCC 43989 / DSM 5975 / JCM 20966 / LMG 6465 / NBRC 14845 / NCIMB 13405 / ORS 571).